A 506-amino-acid polypeptide reads, in one-letter code: NAD(P)H-quinone oxidoreductase subunit 2 (506 aa).

14 consecutive transmembrane segments (helical) span residues 14–34 (AIIP…VDLA), 42–62 (WAPV…ALQW), 79–99 (LAIA…LISW), 108–128 (PIGE…LLCG), 132–152 (LVSV…LSGY), 167–187 (LLVG…LYGL), 206–226 (FITS…IAAV), 240–260 (PTPV…AFAI), 276–296 (LLFT…ALAQ), 302–322 (MLAY…VSGT), 330–350 (VLYL…VILF), 374–394 (LGLS…GFFG), 409–429 (LLVV…ISVI), and 462–482 (IALY…NPLF).

This sequence belongs to the complex I subunit 2 family. NDH-1 can be composed of about 15 different subunits; different subcomplexes with different compositions have been identified which probably have different functions.

It is found in the cellular thylakoid membrane. The enzyme catalyses a plastoquinone + NADH + (n+1) H(+)(in) = a plastoquinol + NAD(+) + n H(+)(out). The catalysed reaction is a plastoquinone + NADPH + (n+1) H(+)(in) = a plastoquinol + NADP(+) + n H(+)(out). NDH-1 shuttles electrons from an unknown electron donor, via FMN and iron-sulfur (Fe-S) centers, to quinones in the respiratory and/or the photosynthetic chain. The immediate electron acceptor for the enzyme in this species is believed to be plastoquinone. Couples the redox reaction to proton translocation, and thus conserves the redox energy in a proton gradient. Cyanobacterial NDH-1 also plays a role in inorganic carbon-concentration. In Prochlorococcus marinus subsp. pastoris (strain CCMP1986 / NIES-2087 / MED4), this protein is NAD(P)H-quinone oxidoreductase subunit 2.